The chain runs to 104 residues: Large ribosomal subunit protein eL30 (104 aa).

The protein belongs to the eukaryotic ribosomal protein eL30 family.

The chain is Large ribosomal subunit protein eL30 (rpl30e) from Sulfolobus acidocaldarius (strain ATCC 33909 / DSM 639 / JCM 8929 / NBRC 15157 / NCIMB 11770).